Here is a 702-residue protein sequence, read N- to C-terminus: Pheromone-processing carboxypeptidase KEX1 (702 aa).

The signal sequence occupies residues Met1–Ala19. At Leu20 to Arg555 the chain is on the lumenal side. Residues Asn85 and Asn122 are each glycosylated (N-linked (GlcNAc...) asparagine). Catalysis depends on residues Ser184 and Asp394. N-linked (GlcNAc...) asparagine glycosylation is found at Asn441 and Asn449. The active site involves His452. The interval Ser491–Ser548 is disordered. The span at Ser524 to Ser548 shows a compositional bias: low complexity. The helical transmembrane segment at Leu556–Tyr576 threads the bilayer. The Cytoplasmic segment spans residues Lys577–Asn702. Disordered stretches follow at residues Ser582 to Lys603 and Ile660 to Asn702. 2 stretches are compositionally biased toward polar residues: residues Pro587–Ser598 and Ala692–Asn702.

The protein belongs to the peptidase S10 family.

The protein localises to the golgi apparatus. Its subcellular location is the trans-Golgi network membrane. The enzyme catalyses Preferential release of a C-terminal arginine or lysine residue.. Its function is as follows. Protease with a carboxypeptidase B-like function involved in the C-terminal processing of the lysine and arginine residues from protein precursors. Promotes cell fusion and is involved in the programmed cell death. The polypeptide is Pheromone-processing carboxypeptidase KEX1 (KEX1) (Candida albicans (strain SC5314 / ATCC MYA-2876) (Yeast)).